A 393-amino-acid polypeptide reads, in one-letter code: Lipid-A-disaccharide synthase (393 aa).

This sequence belongs to the LpxB family.

It carries out the reaction a lipid X + a UDP-2-N,3-O-bis[(3R)-3-hydroxyacyl]-alpha-D-glucosamine = a lipid A disaccharide + UDP + H(+). It participates in bacterial outer membrane biogenesis; LPS lipid A biosynthesis. Functionally, condensation of UDP-2,3-diacylglucosamine and 2,3-diacylglucosamine-1-phosphate to form lipid A disaccharide, a precursor of lipid A, a phosphorylated glycolipid that anchors the lipopolysaccharide to the outer membrane of the cell. The chain is Lipid-A-disaccharide synthase from Rhodopseudomonas palustris (strain ATCC BAA-98 / CGA009).